A 558-amino-acid polypeptide reads, in one-letter code: Glucose-6-phosphate isomerase (558 aa).

The residue at position 12 (K12) is an N6-acetyllysine. Residues S86 and S107 each carry the phosphoserine modification. The residue at position 142 (K142) is an N6-acetyllysine. G159–S160 is a D-glucose 6-phosphate binding site. S185 is subject to Phosphoserine; by CK2. Position 210–215 (S210–T215) interacts with D-glucose 6-phosphate. T250 is subject to Phosphothreonine. D-glucose 6-phosphate contacts are provided by Q354, E358, and H389. The Proton donor role is filled by E358. H389 is a catalytic residue. Position 454 is an N6-acetyllysine; alternate (K454). Position 454 is an N6-malonyllysine; alternate (K454). K454 is subject to N6-succinyllysine; alternate. S455 bears the Phosphoserine mark. K519 is a binding site for D-glucose 6-phosphate. The active site involves K519.

This sequence belongs to the GPI family. Homodimer; in the catalytically active form. Monomer in the secreted form. Post-translationally, phosphorylation at Ser-185 by CK2 has been shown to decrease enzymatic activity and may contribute to secretion by a non-classical secretory pathway. ISGylated.

Its subcellular location is the cytoplasm. The protein localises to the secreted. It carries out the reaction alpha-D-glucose 6-phosphate = beta-D-fructose 6-phosphate. The protein operates within carbohydrate degradation; glycolysis; D-glyceraldehyde 3-phosphate and glycerone phosphate from D-glucose: step 2/4. Functionally, in the cytoplasm, catalyzes the conversion of glucose-6-phosphate to fructose-6-phosphate, the second step in glycolysis, and the reverse reaction during gluconeogenesis. Besides it's role as a glycolytic enzyme, also acts as a secreted cytokine: acts as an angiogenic factor (AMF) that stimulates endothelial cell motility. Acts as a neurotrophic factor, neuroleukin, for spinal and sensory neurons. It is secreted by lectin-stimulated T-cells and induces immunoglobulin secretion. The sequence is that of Glucose-6-phosphate isomerase from Cricetulus griseus (Chinese hamster).